The sequence spans 445 residues: MSRDPTGVGARWAIMIVSLGVTASSFLFINGVAFLIPRLENARGTPLSHAGLLASMPSWGLVVTMFAWGYLLDHVGERMVMAVGSALTAAAAYAAASVHSLLWIGVFLFLGGMAAGGCNSAGGRLVSGWFPPQQRGLAMGIRQTAQPLGIASGALVIPELAERGVHAGLMFPAVVCTLAAVASVLGIVDPPRKSRTKASEQELASPYRGSSILWRIHAASALLMMPQTVTVTFMLVWLINHHGWSVAQAGVLVTISQLLGALGRVAVGRWSDHVGSRMRPVRLIAAAAAATLFLLAAVDNEGSRYDVLLMIAISVIAVLDNGLEAAAITEYAGPYWSGRALGIQNTTQRLMAAAGPPLFGSLITTAAYPTAWALCGVFPLAAVPLVPVRLLPPGLETRARRQSVRRHRWWQAVRCHAWPNGPRRPGPPGQPRRVRQGGTAITPPT.

8 helical membrane passes run 16 to 36 (IVSL…AFLI), 52 to 72 (LLAS…GYLL), 98 to 118 (VHSL…AGGC), 168 to 188 (GLMF…LGIV), 219 to 239 (ASAL…VWLI), 243 to 263 (GWSV…GALG), 283 to 303 (LIAA…NEGS), and 366 to 386 (AAYP…VPLV). Positions 417-445 (AWPNGPRRPGPPGQPRRVRQGGTAITPPT) are disordered.

Belongs to the major facilitator superfamily.

The protein resides in the cell membrane. This is an uncharacterized protein from Mycobacterium tuberculosis (strain CDC 1551 / Oshkosh).